The chain runs to 372 residues: Lipoyl synthase (372 aa).

7 residues coordinate [4Fe-4S] cluster: cysteine 37, cysteine 42, cysteine 48, cysteine 63, cysteine 67, cysteine 70, and serine 292. Residues 49 to 281 (WREGTATVML…ERAALEMGFL (233 aa)) enclose the Radical SAM core domain. A disordered region spans residues 338–372 (LTAELDPDEPRPPVAPAPASASPARLVPAASLIRR). Residues 354 to 372 (APASASPARLVPAASLIRR) are compositionally biased toward low complexity.

The protein belongs to the radical SAM superfamily. Lipoyl synthase family. [4Fe-4S] cluster serves as cofactor.

It localises to the cytoplasm. It carries out the reaction [[Fe-S] cluster scaffold protein carrying a second [4Fe-4S](2+) cluster] + N(6)-octanoyl-L-lysyl-[protein] + 2 oxidized [2Fe-2S]-[ferredoxin] + 2 S-adenosyl-L-methionine + 4 H(+) = [[Fe-S] cluster scaffold protein] + N(6)-[(R)-dihydrolipoyl]-L-lysyl-[protein] + 4 Fe(3+) + 2 hydrogen sulfide + 2 5'-deoxyadenosine + 2 L-methionine + 2 reduced [2Fe-2S]-[ferredoxin]. It functions in the pathway protein modification; protein lipoylation via endogenous pathway; protein N(6)-(lipoyl)lysine from octanoyl-[acyl-carrier-protein]: step 2/2. Its function is as follows. Catalyzes the radical-mediated insertion of two sulfur atoms into the C-6 and C-8 positions of the octanoyl moiety bound to the lipoyl domains of lipoate-dependent enzymes, thereby converting the octanoylated domains into lipoylated derivatives. The chain is Lipoyl synthase from Sorangium cellulosum (strain So ce56) (Polyangium cellulosum (strain So ce56)).